The following is a 383-amino-acid chain: Succinyl-diaminopimelate desuccinylase (383 aa).

A Zn(2+)-binding site is contributed by His72. The active site involves Asp74. Asp105 contacts Zn(2+). The active-site Proton acceptor is the Glu137. Residues Glu138, Glu167, and His352 each coordinate Zn(2+).

This sequence belongs to the peptidase M20A family. DapE subfamily. In terms of assembly, homodimer. Zn(2+) serves as cofactor. Requires Co(2+) as cofactor.

The enzyme catalyses N-succinyl-(2S,6S)-2,6-diaminopimelate + H2O = (2S,6S)-2,6-diaminopimelate + succinate. Its pathway is amino-acid biosynthesis; L-lysine biosynthesis via DAP pathway; LL-2,6-diaminopimelate from (S)-tetrahydrodipicolinate (succinylase route): step 3/3. Functionally, catalyzes the hydrolysis of N-succinyl-L,L-diaminopimelic acid (SDAP), forming succinate and LL-2,6-diaminopimelate (DAP), an intermediate involved in the bacterial biosynthesis of lysine and meso-diaminopimelic acid, an essential component of bacterial cell walls. This Ehrlichia ruminantium (strain Gardel) protein is Succinyl-diaminopimelate desuccinylase.